We begin with the raw amino-acid sequence, 298 residues long: Isochorismatase domain-containing protein 1 (298 aa).

Residue Tyr-160 is modified to Phosphotyrosine. An N6-succinyllysine modification is found at Lys-279.

Belongs to the isochorismatase family.

The chain is Isochorismatase domain-containing protein 1 (ISOC1) from Bos taurus (Bovine).